The sequence spans 826 residues: E3 ubiquitin ligase PARAQUAT TOLERANCE 3 (826 aa).

A DWNN domain is found at Ile-3–Pro-76. The CCHC-type zinc-finger motif lies at Cys-203–Cys-216. Ser-278 is subject to Phosphoserine. Residues Cys-288–Cys-326 form an RING-type; degenerate zinc finger. Composition is skewed to polar residues over residues Ser-356–Gln-365, Pro-396–Lys-406, and Asn-435–Pro-454. Disordered stretches follow at residues Ser-356–Lys-406, Asn-435–Tyr-488, and His-585–Ala-826. The residue at position 397 (Ser-397) is a Phosphoserine. Over residues Met-588–Arg-624 the composition is skewed to basic and acidic residues. Positions Ile-625–Pro-635 are enriched in polar residues. Over residues Asp-651–Ser-667 the composition is skewed to basic and acidic residues. 2 consecutive short sequence motifs (nuclear localization signal) follow at residues Ser-668–Pro-675 and Asp-695–Arg-702. Basic and acidic residues predominate over residues Arg-680 to Arg-706. Over residues Phe-790 to Arg-799 the composition is skewed to basic residues. At Ser-800 the chain carries Phosphoserine. A compositionally biased stretch (basic and acidic residues) spans Gly-809 to Ala-826.

Interacts with PRMT13/PRMT4B in the nucleus. In terms of tissue distribution, expressed constitutively in both shoot and root tissues.

Its subcellular location is the nucleus. The enzyme catalyses S-ubiquitinyl-[E2 ubiquitin-conjugating enzyme]-L-cysteine + [acceptor protein]-L-lysine = [E2 ubiquitin-conjugating enzyme]-L-cysteine + N(6)-ubiquitinyl-[acceptor protein]-L-lysine.. Its function is as follows. E3 ubiquitin ligase acting as a negative regulator of oxidative stress tolerance, probably by mediating 26S proteasome-mediated degradation of PRMT13/PRMT4B, thus preventing APX1 and GPX1 accumulation via the reduction of histone H3 methylation (H3R17me2a). Confers sensitivity to cadmium CdCl(2) and salt NaCl stresses. The protein is E3 ubiquitin ligase PARAQUAT TOLERANCE 3 of Arabidopsis thaliana (Mouse-ear cress).